Consider the following 126-residue polypeptide: uncharacterized protein (126 aa).

The segment at 1-101 (MQASSEPANV…KSVGSQSADE (101 aa)) is disordered. 2 stretches are compositionally biased toward polar residues: residues 14–27 (GQNQ…STSP) and 86–99 (DTEA…SQSA).

This is an uncharacterized protein from Schizosaccharomyces pombe (strain 972 / ATCC 24843) (Fission yeast).